The following is a 257-amino-acid chain: Flavodoxin/ferredoxin--NADP reductase (257 aa).

Positions 2–110 (NPWINANVLK…EKSFGFFTLD (109 aa)) constitute an FAD-binding FR-type domain. Residues 59–62 (RAYS), Tyr75, 83–85 (KLS), and Thr125 contribute to the FAD site. NADP(+)-binding positions include 152-153 (VR), 182-183 (SR), Arg193, 223-225 (NPA), and Asp229. FAD is bound at residue 256-257 (YW).

This sequence belongs to the ferredoxin--NADP reductase type 1 family. FAD serves as cofactor.

Its subcellular location is the cytoplasm. It carries out the reaction 2 reduced [2Fe-2S]-[ferredoxin] + NADP(+) + H(+) = 2 oxidized [2Fe-2S]-[ferredoxin] + NADPH. It catalyses the reaction reduced [flavodoxin] + NADP(+) = oxidized [flavodoxin] + NADPH + 2 H(+). Functionally, transports electrons between flavodoxin or ferredoxin and NADPH. The chain is Flavodoxin/ferredoxin--NADP reductase (fpr) from Buchnera aphidicola subsp. Schizaphis graminum (strain Sg).